The primary structure comprises 255 residues: Lactose phosphotransferase system repressor (255 aa).

The HTH deoR-type domain maps to 3–58; that stretch reads KKRRLEKILDMLKIDGTITIKEIIDELDISDMTARRDLDALEADGLLTRTHGGAQL. The segment at residues 20 to 39 is a DNA-binding region (H-T-H motif); that stretch reads ITIKEIIDELDISDMTARRD.

Functionally, repressor of the lactose catabolism operon. Galactose-6-phosphate is the inducer. This chain is Lactose phosphotransferase system repressor (lacR), found in Lactococcus lactis subsp. lactis (Streptococcus lactis).